Here is a 115-residue protein sequence, read N- to C-terminus: Pro-neuregulin-4, membrane-bound isoform (115 aa).

Topologically, residues 1–62 (MPTDHEQPCG…SSIPSESNLS (62 aa)) are extracellular. The EGF-like domain occupies 5 to 46 (HEQPCGPRHRSFCLNGGICYVIPTIPSPFCRCIENYTGARCE). Cystine bridges form between cysteine 9–cysteine 23, cysteine 17–cysteine 34, and cysteine 36–cysteine 45. N-linked (GlcNAc...) asparagine glycosylation is found at asparagine 39 and asparagine 60. Residues 63-83 (AAFVVLAVLLTLTIAALCFLC) traverse the membrane as a helical segment. Over 84–115 (RKGHLQRASSVQCEISLVETNNTRTRHSHREH) the chain is Cytoplasmic.

The protein belongs to the neuregulin family. As to quaternary structure, interacts with ERBB4. In terms of processing, proteolytic cleavage close to the plasma membrane on the external face leads to the release of the soluble growth factor form. Post-translationally, extensive glycosylation precedes the proteolytic cleavage. Highly expressed in pancreas; weakly expressed in muscle.

The protein localises to the cell membrane. It is found in the secreted. In terms of biological role, low affinity ligand for the ERBB4 tyrosine kinase receptor. Concomitantly recruits ERBB1 and ERBB2 coreceptors, resulting in ligand-stimulated tyrosine phosphorylation and activation of the ERBB receptors. Does not bind to the ERBB1, ERBB2 and ERBB3 receptors. This is Pro-neuregulin-4, membrane-bound isoform (Nrg4) from Mus musculus (Mouse).